The chain runs to 295 residues: Light-independent protochlorophyllide reductase iron-sulfur ATP-binding protein (295 aa).

ATP-binding positions include 10-15 (GIGKST) and K39. S14 contributes to the Mg(2+) binding site. Residues C95 and C129 each contribute to the [4Fe-4S] cluster site. Residue 180–181 (NR) coordinates ATP. Positions 275–289 (TKDKKENKKEDKENS) are enriched in basic and acidic residues. Residues 275–295 (TKDKKENKKEDKENSADFTWL) are disordered.

The protein belongs to the NifH/BchL/ChlL family. Homodimer. Protochlorophyllide reductase is composed of three subunits; ChlL, ChlN and ChlB. [4Fe-4S] cluster serves as cofactor.

The protein localises to the plastid. It is found in the chloroplast. The enzyme catalyses chlorophyllide a + oxidized 2[4Fe-4S]-[ferredoxin] + 2 ADP + 2 phosphate = protochlorophyllide a + reduced 2[4Fe-4S]-[ferredoxin] + 2 ATP + 2 H2O. Its pathway is porphyrin-containing compound metabolism; chlorophyll biosynthesis (light-independent). Component of the dark-operative protochlorophyllide reductase (DPOR) that uses Mg-ATP and reduced ferredoxin to reduce ring D of protochlorophyllide (Pchlide) to form chlorophyllide a (Chlide). This reaction is light-independent. The L component serves as a unique electron donor to the NB-component of the complex, and binds Mg-ATP. The chain is Light-independent protochlorophyllide reductase iron-sulfur ATP-binding protein from Physcomitrium patens (Spreading-leaved earth moss).